A 399-amino-acid chain; its full sequence is Enoyl-[acyl-carrier-protein] reductase [NADH] (399 aa).

NAD(+)-binding positions include 48–53 (GASTGY), 74–75 (FE), 111–112 (DA), and 139–140 (LA). Substrate is bound at residue Tyr-225. Tyr-235 serves as the catalytic Proton donor. Residues Lys-244 and 274–276 (VVT) contribute to the NAD(+) site.

This sequence belongs to the TER reductase family. As to quaternary structure, monomer.

It catalyses the reaction a 2,3-saturated acyl-[ACP] + NAD(+) = a (2E)-enoyl-[ACP] + NADH + H(+). It functions in the pathway lipid metabolism; fatty acid biosynthesis. Its function is as follows. Involved in the final reduction of the elongation cycle of fatty acid synthesis (FAS II). Catalyzes the reduction of a carbon-carbon double bond in an enoyl moiety that is covalently linked to an acyl carrier protein (ACP). In Yersinia enterocolitica serotype O:8 / biotype 1B (strain NCTC 13174 / 8081), this protein is Enoyl-[acyl-carrier-protein] reductase [NADH].